The chain runs to 1638 residues: MAQAGRSGDAFASLDQRRERQEEQAQSGLDKVFYFQGVVELFNRMKIAYGRTPAWTALMKCNAIYLKDFKTAVGVEGTRYGLFFAEEVTKPTWSPDIGANLITLGEKACLDAQNAKYERLQASLKTTSGLVHQVMEKTREAKENLEKANKIQEQLDKVIESNKALHRKIQERNREKMQEYMVRLHNTQKDRDDWVQRCSRLEQENVTLQKRLKEKENALVSVGWDLLGWIVISVLVFGLISLADAQNLTPPAKIVITPGQAEFMDLAKLEKIQVRKYRLDSCELPPEKGCVLYKDYLTTRPVSFLELMAKCSKPDWVSESSYNETTLMEECIQIFGAEWCEGKLVDLVPRKCGEQHVLVNIIEQIEKTREVVTLIYGKVMSYRLDMWITSIFSLVLAGNKEKLFKMAPFIFVAWFLNIPVFLTCVAVNIFPVVSLPFILFQIFMPQFVLVNAFLLWLTLTLTAFYWSEGPKILMEISYALVYTIGFVLWSLGLAVGVTLKLTMVHQILMFCVVAAAICGTKFACTTITVQHPDGTTAKYTRVGKLKNNVVNQCKKVVTTLQTRGVIPATPAKTASIVIVEGKNGTGVGFRFMNYILTAEHVVQGSDIATLKNGSVSVKSKVIKTIPIFESVDNVAVLKLPPELNSVKPIKLAKKVQSDYLTLTAYDPNFQHAATFTGWCIIDGNWLNNSFDTKFGNSGAPYCDHDGRLVGIHLGTQGVLSQGIVIVDALKNTFQLADQCRPQNFDMDEFLEKVIAGTKVSHAAILKELEELREEVQFLKKKCVTYDDYWLCQTIFGQAKGKTKKTVRGRKHLVTKRALGKGHFMKMRMLTDEEYQNMIEKGFSAEEIREAVNALREQAWLNYCIDNDVDDEGEEDWYDDMVETDRVNQEIDEAIERAMEDRGEFYQKKSRLTFVEQAMMHLIQVSKERSQTAKLEVQKENEAQLVKMFERCVTDENTPEGTTSIAALSTEDDVRLVEGKVIDFTKAKNIPVDGEIRREIIPGTKCTEISTGPENKKNILKKKDTHIAEGKVETKSSQQPVDVKDDKPVALEQRKPRACKWCGSSQKHDYRECRFQREKRFCVYCAAMHSMFEGHIRPIECTSCKKSFSGIEKLEDHVVSGECQKKLIEGPVTTKAPTPVPDWLKIFAWEDDILPPEGKTALPENVTLIGHIPVDKLVSRTKKVQDPLLGLVTPWKQDMYDSTTWTVKAYTKMFEKFHYHDPVDFVEQYAEFVLLCDNMVLREHDYMANSNITPIMSTEKNVNSTPAYPKFQAYDSEAEYLEDCGWQEYLDVVSDPETINRRPLWWCFLKNEVLKREKIEDSDIRMILCTDPIFTRIGAMFEQDQNNRMKQQTEIRSAQVGWTPFFGGLDRRVRRLYGDGDRYFVEMDWTRYDGTIPKSLFWRIRQIRFFFLHDSHKTPKMRRLYNWYVKNLLEKIILLPTGEVCQVKKGNPSGQFSTTVDNNMINVWLTTFEVSYLFFKQRGRLPTEKELQENCSMICYGDDRLLSIRKGFVEYEPDTVIDMYKNIFGMWVKRNNIKIQDTPEGLSFCGLTIVKSSTGAYVGVPNVNKILSTLENPVRRLPDVESLWGKLVSLRILCENAPSNVKHFLDEQISNVEEFAARENIQLPEVGPDFYSRIW.

Residues 130-222 (LVHQVMEKTR…KEKENALVSV (93 aa)) are a coiled coil. The next 6 helical transmembrane spans lie at 220–240 (VSVG…FGLI), 379–398 (VMSY…VLAG), 407–427 (APFI…CVAV), 437–457 (FILF…LLWL), 479–499 (ALVY…GVTL), and 507–527 (ILMF…CTTI). Active-site charge relay system; for serine protease activity residues include H600, D632, and S697. The stretch at 758 to 788 (KVSHAAILKELEELREEVQFLKKKCVTYDDY) forms a coiled coil. O-(5'-phospho-RNA)-tyrosine is present on Y834. Residues 1381–1515 (RYFVEMDWTR…SIRKGFVEYE (135 aa)) enclose the RdRp catalytic domain.

It belongs to the astroviridae polyprotein 1AB family. In terms of assembly, monomer. In terms of processing, cleaved by the viral and host proteases. The protease is probably autocatalytically cleaved.

It localises to the host membrane. It carries out the reaction RNA(n) + a ribonucleoside 5'-triphosphate = RNA(n+1) + diphosphate. In terms of biological role, responsible for the cleavage of the polyprotein into functional products. Its function is as follows. Protein covalently attached to the 5' extremity of the genomic and subgenomic RNAs. It may serve as a primer for the replicase. The sequence is that of Non-structural polyprotein 1AB (ORF1) from Turkey astrovirus 2 (TAstV-2).